Reading from the N-terminus, the 380-residue chain is Ribosomal RNA large subunit methyltransferase G (380 aa).

The protein belongs to the methyltransferase superfamily. RlmG family.

It is found in the cytoplasm. It catalyses the reaction guanosine(1835) in 23S rRNA + S-adenosyl-L-methionine = N(2)-methylguanosine(1835) in 23S rRNA + S-adenosyl-L-homocysteine + H(+). Its function is as follows. Specifically methylates the guanine in position 1835 (m2G1835) of 23S rRNA. This chain is Ribosomal RNA large subunit methyltransferase G, found in Aeromonas hydrophila subsp. hydrophila (strain ATCC 7966 / DSM 30187 / BCRC 13018 / CCUG 14551 / JCM 1027 / KCTC 2358 / NCIMB 9240 / NCTC 8049).